The following is a 574-amino-acid chain: ATP-dependent lipid A-core flippase (574 aa).

Transmembrane regions (helical) follow at residues 11-31 (LLSY…GFGI), 60-80 (WFPL…FMGG), 156-176 (YTNW…GVLV), and 244-264 (LNSP…VWLA). Positions 23-304 (LLVLVGFGIN…LTDVNEKLQR (282 aa)) constitute an ABC transmembrane type-1 domain. The ABC transporter domain occupies 335–570 (VRFDHVTLEY…QGAYFQLHQR (236 aa)). An ATP-binding site is contributed by 368–375 (GRSGAGKT).

It belongs to the ABC transporter superfamily. Lipid exporter (TC 3.A.1.106) family. As to quaternary structure, homodimer.

It is found in the cell inner membrane. It carries out the reaction ATP + H2O + lipid A-core oligosaccharideSide 1 = ADP + phosphate + lipid A-core oligosaccharideSide 2.. In terms of biological role, involved in lipopolysaccharide (LPS) biosynthesis. Translocates lipid A-core from the inner to the outer leaflet of the inner membrane. Transmembrane domains (TMD) form a pore in the inner membrane and the ATP-binding domain (NBD) is responsible for energy generation. This Acinetobacter baylyi (strain ATCC 33305 / BD413 / ADP1) protein is ATP-dependent lipid A-core flippase.